Consider the following 658-residue polypeptide: Pentatricopeptide repeat-containing protein At1g69290 (658 aa).

Disordered regions lie at residues 1 to 23 (MFRKTLNSISRRHFSSSSPESPS) and 39 to 61 (TLSPSLSPPQNPKTLTPDQKSSF). A compositionally biased stretch (polar residues) spans 50–61 (PKTLTPDQKSSF). PPR repeat units lie at residues 214-249 (DLVASNAALEACCRQMESLADAENVIESMAVLGVKP), 250-284 (DELSFGFLAYLYARKGLREKISELENLMDGFGFAS), 285-320 (RRILYSNMISGYVKSGDLDSVSDVILHSLKEGGEES), 323-353 (SVETYCELVKGFIESKSVKSLAKVILEAQKL), 361-395 (DSSVGFGIINACVNLGFSDKAHSILEEMIAQGGGS), 397-431 (GIGVYVPILKAYCKEYRTAEATQLVTEISSSGLQL), 432-466 (DVEISNALIEASMTNQDFISAFTLFRDMRENRVVD), 467-497 (LKGSYLTIMTGLLENQRPELMAAFLDEVVED), 503-537 (NSHDWNSIIHAFCKSGRLEDARRTFRRMVFLRYEP), 538-568 (NNQTYLSLINGYVSGEKYFNVLLLWNEIKGK), and 581-615 (DHALVDAFLYALVKGGFFDAAMQVVEKSQEMKIFV).

This sequence belongs to the PPR family. P subfamily.

The protein is Pentatricopeptide repeat-containing protein At1g69290 of Arabidopsis thaliana (Mouse-ear cress).